A 345-amino-acid chain; its full sequence is NADH-quinone oxidoreductase subunit H (345 aa).

The next 8 helical transmembrane spans lie at 13–33 (VLII…LLFL), 84–104 (FMLA…VIPF), 115–135 (VAIL…IMGG), 161–181 (IGLI…SAIV), 190–210 (FFSW…ISAL), 248–268 (YIAI…GWLS), 278–298 (IWMV…KAIV), and 309–329 (LGWK…AFAA).

This sequence belongs to the complex I subunit 1 family. NDH-1 is composed of 14 different subunits. Subunits NuoA, H, J, K, L, M, N constitute the membrane sector of the complex.

It is found in the cell inner membrane. It catalyses the reaction a quinone + NADH + 5 H(+)(in) = a quinol + NAD(+) + 4 H(+)(out). Its function is as follows. NDH-1 shuttles electrons from NADH, via FMN and iron-sulfur (Fe-S) centers, to quinones in the respiratory chain. The immediate electron acceptor for the enzyme in this species is believed to be ubiquinone. Couples the redox reaction to proton translocation (for every two electrons transferred, four hydrogen ions are translocated across the cytoplasmic membrane), and thus conserves the redox energy in a proton gradient. This subunit may bind ubiquinone. The protein is NADH-quinone oxidoreductase subunit H of Dinoroseobacter shibae (strain DSM 16493 / NCIMB 14021 / DFL 12).